The chain runs to 595 residues: Estrogen receptor (595 aa).

The modulating(transactivation AF-1); mediates interaction with MACROD1 stretch occupies residues 1–184 (MTMTLHTKAS…AMESVKETRY (184 aa)). Serine 10 is a glycosylation site (O-linked (GlcNAc) serine). Residues 35–47 (LERALSEVYVDSS) are required for interaction with NCOA1. Residues 35–174 (LERALSEVYV…LSSSSEKGSM (140 aa)) are interaction with DDX5; self-association. Residues serine 103 and serine 105 each carry the phosphoserine; by CDK2 modification. At serine 118 the chain carries Phosphoserine. A disordered region spans residues 143 to 174 (DSGPPAFYRSNSDNRRQSGRERLSSSSEKGSM). Positions 154–165 (SDNRRQSGRERL) are enriched in basic and acidic residues. A Phosphoserine; by CK2 modification is found at serine 167. NR C4-type zinc fingers lie at residues 185 to 205 (CAVCNDYASGYHYGVWSCEGC) and 221 to 245 (CPATNQCTIDKNRRKSCQACRLRKC). Positions 185–250 (CAVCNDYASG…RLRKCYEVGM (66 aa)) form a DNA-binding region, nuclear receptor. The tract at residues 185-310 (CAVCNDYASG…TKKNSPALSL (126 aa)) is mediates interaction with DNTTIP2. A hinge region spans residues 251 to 310 (MKGGIRKDRRGGRMLKHKRQRDDLEGRNDMGPSGDMRATNLWPSPLVIKHTKKNSPALSL). Arginine 260 bears the Asymmetric dimethylarginine; by PRMT1 mark. Over residues 260 to 269 (RGGRMLKHKR) the composition is skewed to basic residues. Positions 260 to 285 (RGGRMLKHKRQRDDLEGRNDMGPSGD) are disordered. Residues 262–595 (GRMLKHKRQR…SEAESFPNTI (334 aa)) are interaction with AKAP13. The interval 264–595 (MLKHKRQRDD…SEAESFPNTI (332 aa)) is self-association. Positions 311 to 547 (TADQMVSALL…DLLLEMLDAH (237 aa)) constitute an NR LBD domain. The transactivation AF-2 stretch occupies residues 311-595 (TADQMVSALL…SEAESFPNTI (285 aa)). Glutamate 353 and arginine 394 together coordinate 17beta-estradiol. A lipid anchor (S-palmitoyl cysteine) is attached at cysteine 447. Histidine 524 lines the 17beta-estradiol pocket. Tyrosine 537 carries the phosphotyrosine; by Tyr-kinases modification. Residues 554–578 (SRMGVSPEEPSQSQLTTTNSTSSHS) are disordered. Low complexity predominate over residues 564–578 (SQSQLTTTNSTSSHS). A glycan (O-linked (GlcNAc) threonine) is linked at threonine 571.

It belongs to the nuclear hormone receptor family. NR3 subfamily. Binds DNA as a homodimer. Can form a heterodimer with ESR2. Interacts with coactivator NCOA5. Interacts with PELP1, the interaction is enhanced by 17-beta-estradiol; the interaction increases ESR1 transcriptional activity. Interacts with NCOA7; the interaction is ligand-inducible. Interacts with AKAP13, CUEDC2, HEXIM1, KDM5A, MAP1S, SMARD1, and UBE1C. Interacts with MUC1; the interaction is stimulated by 7 beta-estradiol (E2) and enhances ESR1-mediated transcription. Interacts with DNTTIP2, and UIMC1. Interacts with KMT2D/MLL2. Interacts with ATAD2; the interaction is enhanced by estradiol. Interacts with KIF18A and LDB1. Interacts with RLIM (via its C-terminus). Interacts with MACROD1. Interacts with SH2D4A and PLCG. Interacts with SH2D4A; the interaction blocks binding to PLCG and inhibits estrogen-induced cell proliferation. Interacts with DYNLL1. Interacts with CCDC62; the interaction requires estradiol and appears to enhance the transcription of target genes. Interacts with NR2C1; the interaction prevents homodimerization of ESR1 and suppresses its transcriptional activity and cell growth. Interacts with DNAAF4. Interacts with PRMT2. Interacts with RBFOX2. Interacts with EP300; the interaction is estrogen-dependent and enhanced by CITED1. Interacts with CITED1; the interaction is estrogen-dependent. Interacts with FAM120B, FOXL2, PHB2 and SLC30A9. Interacts with coactivators NCOA3 and NCOA6. Interacts with STK3/MST2 only in the presence of SAV1 and vice-versa. Binds to CSNK1D. Interacts with NCOA2; NCOA2 can interact with ESR1 AF-1 and AF-2 domains simultaneously and mediate their transcriptional synergy. Interacts with DDX5. Interacts with NCOA1; the interaction seems to require a self-association of N-terminal and C-terminal regions. Interacts with ZNF366, DDX17, NFKB1, RELA, SP1 and SP3. Interacts with NRIP1. Interacts with GPER1; the interaction occurs in an estrogen-dependent manner. Interacts with CLOCK and the interaction is stimulated by estrogen. Interacts with TRIP4 (ufmylated); estrogen dependent. Interacts with LMTK3; the interaction phosphorylates ESR1 (in vitro) and protects it against proteasomal degradation. Interacts with CCAR2 (via N-terminus) in a ligand-independent manner. Interacts with ZFHX3. Interacts with SFR1 in a ligand-dependent and -independent manner. Interacts with DCAF13, LATS1 and DCAF1; regulates ESR1 ubiquitination and ubiquitin-mediated proteasomal degradation. Interacts (via DNA-binding domain) with POU4F2 (C-terminus); this interaction increases the estrogen receptor ESR1 transcriptional activity in a DNA- and ligand 17-beta-estradiol-independent manner. Interacts with ESRRB isoform 1. Interacts with UBE3A and WBP2. Interacts with GTF2B. Interacts with RBM39. In the absence of hormonal ligand, interacts with TACC1. Interacts with PI3KR1 or PI3KR2 and PTK2/FAK1. Interacts with SRC. Interacts with BAG1; the interaction is promoted in the absence of estradiol (17-beta-estradiol/E2). Interacts with and ubiquitinated by STUB1; the interaction is promoted in the absence of estradiol (17-beta-estradiol/E2). Interacts with NEDD8. Post-translationally, ubiquitinated; regulated by LATS1 via DCAF1 it leads to ESR1 proteasomal degradation. Deubiquitinated by OTUB1. Ubiquitinated by STUB1/CHIP; in the CA1 hippocampal region following loss of endogenous circulating estradiol (17-beta-estradiol/E2). Ubiquitinated by UBR5, leading to its degradation: UBR5 specifically recognizes and binds ligand-bound ESR1 when it is not associated with coactivators (NCOAs). In presence of NCOAs, the UBR5-degron is not accessible, preventing its ubiquitination and degradation. In terms of processing, phosphorylated by cyclin A/CDK2 and CK1. Phosphorylation probably enhances transcriptional activity. Dephosphorylation at Ser-118 by PPP5C inhibits its transactivation activity. Phosphorylated by LMTK3 (in vitro). Palmitoylated at Cys-447 by ZDHHC7 and ZDHHC21. Palmitoylation is required for plasma membrane targeting and for rapid intracellular signaling via ERK and AKT kinases and cAMP generation, but not for signaling mediated by the nuclear hormone receptor. Post-translationally, dimethylated by PRMT1 at Arg-260. The methylation may favor cytoplasmic localization. Demethylated by JMJD6 at Arg-260.

Its subcellular location is the nucleus. The protein localises to the cytoplasm. It localises to the golgi apparatus. The protein resides in the cell membrane. Its function is as follows. Nuclear hormone receptor. The steroid hormones and their receptors are involved in the regulation of eukaryotic gene expression and affect cellular proliferation and differentiation in target tissues. Ligand-dependent nuclear transactivation involves either direct homodimer binding to a palindromic estrogen response element (ERE) sequence or association with other DNA-binding transcription factors, such as AP-1/c-Jun, c-Fos, ATF-2, Sp1 and Sp3, to mediate ERE-independent signaling. Ligand binding induces a conformational change allowing subsequent or combinatorial association with multiprotein coactivator complexes through LXXLL motifs of their respective components. Mutual transrepression occurs between the estrogen receptor (ER) and NF-kappa-B in a cell-type specific manner. Decreases NF-kappa-B DNA-binding activity and inhibits NF-kappa-B-mediated transcription from the IL6 promoter and displace RELA/p65 and associated coregulators from the promoter. Recruited to the NF-kappa-B response element of the CCL2 and IL8 promoters and can displace CREBBP. Present with NF-kappa-B components RELA/p65 and NFKB1/p50 on ERE sequences. Can also act synergistically with NF-kappa-B to activate transcription involving respective recruitment adjacent response elements; the function involves CREBBP. Can activate the transcriptional activity of TFF1. Also mediates membrane-initiated estrogen signaling involving various kinase cascades. Essential for MTA1-mediated transcriptional regulation of BRCA1 and BCAS3. Maintains neuronal survival in response to ischemic reperfusion injury when in the presence of circulating estradiol (17-beta-estradiol/E2). This chain is Estrogen receptor (ESR1), found in Mesocricetus auratus (Golden hamster).